The chain runs to 239 residues: Ribonuclease HII (239 aa).

An RNase H type-2 domain is found at 18-231; it reads KIIVGLDEAG…SKNLLKEIEE (214 aa). The a divalent metal cation site is built by aspartate 24, glutamate 25, and aspartate 125.

Belongs to the RNase HII family. Mn(2+) is required as a cofactor. Requires Mg(2+) as cofactor.

The protein localises to the cytoplasm. The catalysed reaction is Endonucleolytic cleavage to 5'-phosphomonoester.. Endonuclease that specifically degrades the RNA of RNA-DNA hybrids. The polypeptide is Ribonuclease HII (Methanococcus maripaludis (strain C6 / ATCC BAA-1332)).